Consider the following 238-residue polypeptide: ATP-dependent Clp protease ATP-binding subunit CLPT1, chloroplastic (238 aa).

The N-terminal 64 residues, 1–64, are a transit peptide targeting the chloroplast; sequence MASYTVSFIP…VPKLRCLTSA (64 aa). The region spanning 83 to 228 is the Clp R domain; it reads IPKWSARAIK…KEVEKSMNED (146 aa). 2 repeat regions span residues 86–151 and 163–228; these read WSAR…LGKS and LTEP…MNED.

It belongs to the ClpA/ClpB family. Monomer and homodimer. Binds to the CLP3-6 ring (P-ring). The dimers monomerize before association to the P-ring. Component of the chloroplastic Clp protease core complex which consist of at least 16 proteins: CLPP4 (3 copies), CLPP5 (3 copies), CLPR4 (2 copies), ClpP1 (1 copy), CLPP6 (1 copy), CLPR2 (1 copy), CLPT1 (1 copy), CLPT2 (1 copy) and 3 copies of CLPP3 and/or CLPR1 and/or CLPR3. Interacts with CLPC2 and CLPD. Interacts with CPN21. No interactions with CLPS1.

It localises to the plastid. The protein resides in the chloroplast. Accessory protein regulating the assembly of the plastidial Clp protease system. CLPT1 first binds to the heptameric P-ring containing the CLP3-6 subunits followed by CLPT2, and only then does the P-ring combine with the R-ring composed of the clpP1 and CLPR1-4 subunits. Once the core complex is fully assembled, it then associates to the CLPC chaperone partner to form the functional protease. CLPT1 and CLPT2 are partially redundant. The sequence is that of ATP-dependent Clp protease ATP-binding subunit CLPT1, chloroplastic from Arabidopsis thaliana (Mouse-ear cress).